A 552-amino-acid polypeptide reads, in one-letter code: MSDIAITICILALVAVIGLWIGHWKIRGVGLGIGGVLFGGIIVAHFMNQNGLKLDAHTLHFIQEFGLILFVYTIGIQVGPGFFASLLSAGLKLNGLATLIVVLGAVSVFVLYKVVNVDLDIILGIYSGAVTNTPSLGAGQQILTELGIENANSTMGMAYAMAYPFGICGILLSMWLIRLFFKIKVEEEEKQFQKASGQDKESLTTVNVKVTNPNLSGLRLIDIPGFDNKDVVCSRLKRQENISVPSADTIIAIDDVLHLVGEINALKKMKLVIGEEIDMPMTHLAGDLRSERIVVTNEKVLGKRIKHLGIHKKYGVVISRLNRAGVELVPTANTALQFGDVLHIVGRSDTIGNATSIIGNAQQKLQQVQMLPVFIGIGLGVLLGSIPFYIPGFPVALKLGLAGGPLVVALILARIGSVGKLYWFMPPSANLALREIGIVLFLAVVGLKSGGGFVDTLVHGQGLEWMGYGMFITFIPLMITGIIARLYMKLNYLSLCGLLAGSMTDPPALAFANAIKEDSGIAALSYATVYPLSMFLRIMSPQLLAILLWTAM.

5 helical membrane-spanning segments follow: residues 4–24 (IAITICILALVAVIGLWIGHW), 28–48 (GVGLGIGGVLFGGIIVAHFMN), 67–87 (LILFVYTIGIQVGPGFFASLL), 95–115 (GLATLIVVLGAVSVFVLYKVV), and 157–177 (MAYAMAYPFGICGILLSMWLI). 2 consecutive RCK C-terminal domains span residues 190-275 (KQFQ…VIGE) and 277-360 (IDMP…IIGN). The next 6 membrane-spanning stretches (helical) occupy residues 370–390 (MLPVFIGIGLGVLLGSIPFYI), 402–424 (AGGPLVVALILARIGSVGKLYWF), 438–458 (IVLFLAVVGLKSGGGFVDTLV), 463–483 (LEWMGYGMFITFIPLMITGII), 495–515 (LCGLLAGSMTDPPALAFANAI), and 529–549 (VYPLSMFLRIMSPQLLAILLW).

It belongs to the AAE transporter (TC 2.A.81) family. YidE subfamily.

It localises to the cell membrane. This Histophilus somni (strain 129Pt) (Haemophilus somnus) protein is Putative transport protein HS_1470.